We begin with the raw amino-acid sequence, 148 residues long: Ribonuclease H (148 aa).

Positions 1 to 142 (MSDSVEMFTD…ADQLANRGVD (142 aa)) constitute an RNase H type-1 domain. Residues Asp-10, Glu-48, Asp-70, and Asp-134 each contribute to the Mg(2+) site.

This sequence belongs to the RNase H family. As to quaternary structure, monomer. Mg(2+) is required as a cofactor.

It localises to the cytoplasm. It carries out the reaction Endonucleolytic cleavage to 5'-phosphomonoester.. Endonuclease that specifically degrades the RNA of RNA-DNA hybrids. This is Ribonuclease H from Pseudomonas putida (strain ATCC 700007 / DSM 6899 / JCM 31910 / BCRC 17059 / LMG 24140 / F1).